Here is a 432-residue protein sequence, read N- to C-terminus: Cyclic 2,3-diphosphoglycerate synthetase (432 aa).

This sequence belongs to the cyclic 2,3-diphosphoglycerate synthetase family.

The protein resides in the cytoplasm. The catalysed reaction is (2R)-2,3-bisphosphoglycerate + ATP + H(+) = cyclic (2R)-2,3-bisphosphoglycerate + ADP + phosphate. Functionally, catalyzes the formation of cyclic 2,3-diphosphoglycerate (cDPG) by formation of an intramolecular phosphoanhydride bond at the expense of ATP. The protein is Cyclic 2,3-diphosphoglycerate synthetase of Thermococcus onnurineus (strain NA1).